The sequence spans 162 residues: Phosphopantetheine adenylyltransferase (162 aa).

Serine 11 contributes to the substrate binding site. ATP-binding positions include 11–12 and histidine 19; that span reads SF. Substrate contacts are provided by lysine 43, leucine 75, and arginine 89. ATP contacts are provided by residues 90–92, glutamate 100, and 125–131; these read GLR and FSYISSS.

It belongs to the bacterial CoaD family. In terms of assembly, homohexamer. It depends on Mg(2+) as a cofactor.

Its subcellular location is the cytoplasm. It carries out the reaction (R)-4'-phosphopantetheine + ATP + H(+) = 3'-dephospho-CoA + diphosphate. The protein operates within cofactor biosynthesis; coenzyme A biosynthesis; CoA from (R)-pantothenate: step 4/5. Functionally, reversibly transfers an adenylyl group from ATP to 4'-phosphopantetheine, yielding dephospho-CoA (dPCoA) and pyrophosphate. The chain is Phosphopantetheine adenylyltransferase from Petrotoga mobilis (strain DSM 10674 / SJ95).